Consider the following 328-residue polypeptide: 4-hydroxy-3-methylbut-2-enyl diphosphate reductase (328 aa).

Residue Cys-13 coordinates [4Fe-4S] cluster. His-41 and His-75 together coordinate (2E)-4-hydroxy-3-methylbut-2-enyl diphosphate. Residues His-41 and His-75 each contribute to the dimethylallyl diphosphate site. Positions 41 and 75 each coordinate isopentenyl diphosphate. Position 97 (Cys-97) interacts with [4Fe-4S] cluster. A (2E)-4-hydroxy-3-methylbut-2-enyl diphosphate-binding site is contributed by His-125. His-125 contacts dimethylallyl diphosphate. Residue His-125 coordinates isopentenyl diphosphate. Catalysis depends on Glu-127, which acts as the Proton donor. Residue Thr-168 coordinates (2E)-4-hydroxy-3-methylbut-2-enyl diphosphate. Position 225 (Cys-225) interacts with [4Fe-4S] cluster. Residues Ser-253, Ser-254, Asn-255, and Ser-302 each contribute to the (2E)-4-hydroxy-3-methylbut-2-enyl diphosphate site. Dimethylallyl diphosphate-binding residues include Ser-253, Ser-254, Asn-255, and Ser-302. 4 residues coordinate isopentenyl diphosphate: Ser-253, Ser-254, Asn-255, and Ser-302.

Belongs to the IspH family. [4Fe-4S] cluster serves as cofactor.

It carries out the reaction isopentenyl diphosphate + 2 oxidized [2Fe-2S]-[ferredoxin] + H2O = (2E)-4-hydroxy-3-methylbut-2-enyl diphosphate + 2 reduced [2Fe-2S]-[ferredoxin] + 2 H(+). The enzyme catalyses dimethylallyl diphosphate + 2 oxidized [2Fe-2S]-[ferredoxin] + H2O = (2E)-4-hydroxy-3-methylbut-2-enyl diphosphate + 2 reduced [2Fe-2S]-[ferredoxin] + 2 H(+). It functions in the pathway isoprenoid biosynthesis; dimethylallyl diphosphate biosynthesis; dimethylallyl diphosphate from (2E)-4-hydroxy-3-methylbutenyl diphosphate: step 1/1. Its pathway is isoprenoid biosynthesis; isopentenyl diphosphate biosynthesis via DXP pathway; isopentenyl diphosphate from 1-deoxy-D-xylulose 5-phosphate: step 6/6. Catalyzes the conversion of 1-hydroxy-2-methyl-2-(E)-butenyl 4-diphosphate (HMBPP) into a mixture of isopentenyl diphosphate (IPP) and dimethylallyl diphosphate (DMAPP). Acts in the terminal step of the DOXP/MEP pathway for isoprenoid precursor biosynthesis. The protein is 4-hydroxy-3-methylbut-2-enyl diphosphate reductase of Chlorobium chlorochromatii (strain CaD3).